Reading from the N-terminus, the 261-residue chain is Global transcriptional regulator CodY (261 aa).

The tract at residues 1–159 is GAF domain; the sequence is MANLLDKTRK…ASTVVGLQLL (159 aa). A DNA-binding region (H-T-H motif) is located at residues 207-226; it reads ASVIADRIGITRSVIVNALR.

This sequence belongs to the CodY family.

It is found in the cytoplasm. DNA-binding global transcriptional regulator which is involved in the adaptive response to starvation and acts by directly or indirectly controlling the expression of numerous genes in response to nutrient availability. During rapid exponential growth, CodY is highly active and represses genes whose products allow adaptation to nutrient depletion. The sequence is that of Global transcriptional regulator CodY from Streptococcus thermophilus (strain CNRZ 1066).